The following is a 423-amino-acid chain: AP-1 complex subunit mu-2 (423 aa).

The 254-residue stretch at Lys-168–Arg-421 folds into the MHD domain.

Belongs to the adaptor complexes medium subunit family. Adaptor protein complex 1 (AP-1) is a heterotetramer composed of two large adaptins (gamma-type subunit AP1G1 and beta-type subunit AP1B1), a medium adaptin (mu-type subunit AP1M1 or AP1M2) and a small adaptin (sigma-type subunit AP1S1 or AP1S2 or AP1S3). Interacts with P2X4. Phosphorylation of membrane-bound AP1M1/AP1M2 increases its affinity for sorting signals.

It is found in the golgi apparatus. The protein localises to the cytoplasmic vesicle. Its subcellular location is the clathrin-coated vesicle membrane. In terms of biological role, subunit of clathrin-associated adaptor protein complex 1 that plays a role in protein sorting in the trans-Golgi network (TGN) and endosomes. The AP complexes mediate the recruitment of clathrin to membranes and the recognition of sorting signals within the cytosolic tails of transmembrane cargo molecules. This Homo sapiens (Human) protein is AP-1 complex subunit mu-2 (AP1M2).